A 94-amino-acid polypeptide reads, in one-letter code: MSCEVLRKLEEVIRRRIEEKNPESYTYRLYSSGMHNVARKVGEEAVEVAVAALAEGKGRVVEEAADLLYHLLVLLNSTGLSLADVCAELEKRMR.

It belongs to the PRA-PH family.

The protein resides in the cytoplasm. It catalyses the reaction 1-(5-phospho-beta-D-ribosyl)-ATP + H2O = 1-(5-phospho-beta-D-ribosyl)-5'-AMP + diphosphate + H(+). Its pathway is amino-acid biosynthesis; L-histidine biosynthesis; L-histidine from 5-phospho-alpha-D-ribose 1-diphosphate: step 2/9. This chain is Phosphoribosyl-ATP pyrophosphatase, found in Pyrobaculum neutrophilum (strain DSM 2338 / JCM 9278 / NBRC 100436 / V24Sta) (Thermoproteus neutrophilus).